Here is a 432-residue protein sequence, read N- to C-terminus: uncharacterized protein (432 aa).

SIS domains lie at W105 to S244 and C277 to P422.

This is an uncharacterized protein from Saccharomyces cerevisiae (strain Lalvin EC1118 / Prise de mousse) (Baker's yeast).